A 1226-amino-acid chain; its full sequence is Methionine synthase (1226 aa).

One can recognise a Hcy-binding domain in the interval 6–326 (RQQLEQQLKQ…EHIAAIAKAV (321 aa)). Residues C248, C311, and C312 each coordinate Zn(2+). A Pterin-binding domain is found at 357-618 (FVNVGERTNV…VPLKLREAVE (262 aa)). Positions 651-745 (SALEWRAWPV…FINAQKSGST (95 aa)) constitute a B12-binding N-terminal domain. Methylcob(III)alamin contacts are provided by residues E695, 757-761 (GDVHD), H760, S805, T809, and A861. One can recognise a B12-binding domain in the interval 747–882 (NGKILLATVK…SDEQRPGFIE (136 aa)). An AdoMet activation domain is found at 898–1226 (KTPKSRPVTL…EKWLAPNLDA (329 aa)). S-adenosyl-L-methionine is bound by residues D948, R1136, and 1191-1192 (YF).

The protein belongs to the vitamin-B12 dependent methionine synthase family. Methylcob(III)alamin serves as cofactor. The cofactor is Zn(2+).

It carries out the reaction (6S)-5-methyl-5,6,7,8-tetrahydrofolate + L-homocysteine = (6S)-5,6,7,8-tetrahydrofolate + L-methionine. Its pathway is amino-acid biosynthesis; L-methionine biosynthesis via de novo pathway; L-methionine from L-homocysteine (MetH route): step 1/1. Catalyzes the transfer of a methyl group from methyl-cobalamin to homocysteine, yielding enzyme-bound cob(I)alamin and methionine. Subsequently, remethylates the cofactor using methyltetrahydrofolate. The polypeptide is Methionine synthase (metH) (Vibrio cholerae serotype O1 (strain ATCC 39315 / El Tor Inaba N16961)).